The following is a 103-amino-acid chain: Large ribosomal subunit protein bL21 (103 aa).

It belongs to the bacterial ribosomal protein bL21 family. Part of the 50S ribosomal subunit. Contacts protein L20.

In terms of biological role, this protein binds to 23S rRNA in the presence of protein L20. In Shewanella loihica (strain ATCC BAA-1088 / PV-4), this protein is Large ribosomal subunit protein bL21.